Reading from the N-terminus, the 316-residue chain is Retinol dehydrogenase 12 (316 aa).

46–52 (GANTGIG) serves as a coordination point for NADP(+). S175 lines the substrate pocket. Y200 acts as the Proton acceptor in catalysis.

Belongs to the short-chain dehydrogenases/reductases (SDR) family. In terms of tissue distribution, expressed in the inner segments of the photoreceptor in retina.

The enzyme catalyses all-trans-retinol + NADP(+) = all-trans-retinal + NADPH + H(+). It catalyses the reaction 11-cis-retinol + NADP(+) = 11-cis-retinal + NADPH + H(+). It carries out the reaction 9-cis-retinol + NADP(+) = 9-cis-retinal + NADPH + H(+). The catalysed reaction is a 4-hydroxynonen-1-ol + NADP(+) = a 4-hydroxynonenal + NADPH + H(+). The enzyme catalyses (E)-non-2-en-1-ol + NADP(+) = (E)-non-2-enal + NADPH + H(+). It catalyses the reaction (Z)-non-6-en-1-ol + NADP(+) = (Z)-non-6-enal + NADPH + H(+). It carries out the reaction nonan-1-ol + NADP(+) = nonanal + NADPH + H(+). It functions in the pathway cofactor metabolism; retinol metabolism. In terms of biological role, retinoids dehydrogenase/reductase with a clear preference for NADP. Displays high activity towards 9-cis, 11-cis and all-trans-retinal. Shows very weak activity toward 13-cis-retinol. Also exhibits activity, albeit with lower affinity than for retinaldehydes, towards lipid peroxidation products (C9 aldehydes) such as 4-hydroxynonenal and trans-2-nonenal. Plays an important function in photoreceptor cells to detoxify 4-hydroxynonenal and potentially other toxic aldehyde products resulting from lipid peroxidation. Has no dehydrogenase activity towards steroids. The polypeptide is Retinol dehydrogenase 12 (Rdh12) (Mus musculus (Mouse)).